The primary structure comprises 329 residues: Beta-ribofuranosylphenol 5'-phosphate synthase (329 aa).

This sequence belongs to the beta-RFA-P synthase family. In terms of assembly, homodimer. It depends on Mg(2+) as a cofactor.

It carries out the reaction 5-phospho-alpha-D-ribose 1-diphosphate + 4-hydroxybenzoate + H(+) = 4-(beta-D-ribofuranosyl)phenol 5'-phosphate + CO2 + diphosphate. The enzyme catalyses 4-aminobenzoate + 5-phospho-alpha-D-ribose 1-diphosphate + H(+) = 4-(beta-D-ribofuranosyl)aminobenzene 5'-phosphate + CO2 + diphosphate. It participates in cofactor biosynthesis; 5,6,7,8-tetrahydromethanopterin biosynthesis. Functionally, catalyzes the condensation of 4-hydroxybenzoate (HB) with 5-phospho-alpha-D-ribose 1-diphosphate (PRPP) to produce beta-ribofuranosylphenol 5'-phosphate (beta-RFH-P). Also catalyzes the condensation of 4-aminobenzoate (pABA) with PRPP to produce beta-ribofuranosylaminobenzene 5'-phosphate (beta-RFA-P). Only 4-hydroxybenzoate is known to be biosynthesized by methanogenic archaea, but 4-aminobenzoate can be used as substrate by growing methanogens when it is present in the growth medium. This Methanothermobacter thermautotrophicus (strain ATCC 29096 / DSM 1053 / JCM 10044 / NBRC 100330 / Delta H) (Methanobacterium thermoautotrophicum) protein is Beta-ribofuranosylphenol 5'-phosphate synthase.